The chain runs to 209 residues: Phosphoheptose isomerase (209 aa).

In terms of domain architecture, SIS spans 50–209 (IADTFREGGK…ELVEKMMGYD (160 aa)). 65–67 (NGG) is a binding site for substrate. 2 residues coordinate Zn(2+): H74 and E78. Residues E78, 109-110 (ND), 135-137 (STS), S140, and Q188 each bind substrate. 2 residues coordinate Zn(2+): Q188 and H196.

Belongs to the SIS family. GmhA subfamily. It depends on Zn(2+) as a cofactor.

It is found in the cytoplasm. The enzyme catalyses 2 D-sedoheptulose 7-phosphate = D-glycero-alpha-D-manno-heptose 7-phosphate + D-glycero-beta-D-manno-heptose 7-phosphate. The protein operates within carbohydrate biosynthesis; D-glycero-D-manno-heptose 7-phosphate biosynthesis; D-glycero-alpha-D-manno-heptose 7-phosphate and D-glycero-beta-D-manno-heptose 7-phosphate from sedoheptulose 7-phosphate: step 1/1. Catalyzes the isomerization of sedoheptulose 7-phosphate in D-glycero-D-manno-heptose 7-phosphate. The sequence is that of Phosphoheptose isomerase from Chlorobaculum tepidum (strain ATCC 49652 / DSM 12025 / NBRC 103806 / TLS) (Chlorobium tepidum).